The primary structure comprises 75 residues: uncharacterized protein (75 aa).

2 helical membrane passes run 7-26 (LINA…AASA) and 36-58 (MHLF…FCPV).

The protein localises to the cell membrane. This is an uncharacterized protein from Bacillus subtilis (strain 168).